Consider the following 388-residue polypeptide: MNLHEYQAKQLFAEYGLPVSEGYACATPQEAAEAADKIGGNTWVVKCQVHAGGRGKAGGVKLAKSKDEIRAFAQNWLGKNLVTYQTDANGQPVTKILVESCTDIAKELYLGAVVDRGSRRVVFMASTEGGVEIEKVAHETPELIHKAALDPLVGPQPYQARELAFKLGLVGEQIKQFTKIFMGLGQMFLDCDFALLEINPLVITAQGNLHCLDGKINIDANALYRQPKLRQMHDPSQDDPREAHAAQWELNYVALDGNIGCMVNGAGLAMGTMDIVNLHGGSPANFLDVGGGATKERVTEAFKIILSDSKVQAVLVNIFGGIVRCDMIAEGIIGAVKEVGVKVPVVVRLEGNNAELGARKLADSGLNIIAATSLTDAAQQVVKAAEAK.

The region spanning 9-244 (KQLFAEYGLP…PSQDDPREAH (236 aa)) is the ATP-grasp domain. ATP contacts are provided by residues K46, 53-55 (GRG), E99, T102, and E107. Mg(2+) is bound by residues N199 and D213. Substrate-binding positions include N264 and 321–323 (GIV).

Belongs to the succinate/malate CoA ligase beta subunit family. In terms of assembly, heterotetramer of two alpha and two beta subunits. The cofactor is Mg(2+).

It carries out the reaction succinate + ATP + CoA = succinyl-CoA + ADP + phosphate. The enzyme catalyses GTP + succinate + CoA = succinyl-CoA + GDP + phosphate. It functions in the pathway carbohydrate metabolism; tricarboxylic acid cycle; succinate from succinyl-CoA (ligase route): step 1/1. In terms of biological role, succinyl-CoA synthetase functions in the citric acid cycle (TCA), coupling the hydrolysis of succinyl-CoA to the synthesis of either ATP or GTP and thus represents the only step of substrate-level phosphorylation in the TCA. The beta subunit provides nucleotide specificity of the enzyme and binds the substrate succinate, while the binding sites for coenzyme A and phosphate are found in the alpha subunit. This Aeromonas hydrophila subsp. hydrophila (strain ATCC 7966 / DSM 30187 / BCRC 13018 / CCUG 14551 / JCM 1027 / KCTC 2358 / NCIMB 9240 / NCTC 8049) protein is Succinate--CoA ligase [ADP-forming] subunit beta.